We begin with the raw amino-acid sequence, 245 residues long: Orotidine 5'-phosphate decarboxylase (245 aa).

Substrate is bound by residues Asp22, Lys44, 71–80 (DLKFHDIPNT), Thr131, Arg192, Gln201, Gly221, and Arg222. The active-site Proton donor is the Lys73.

The protein belongs to the OMP decarboxylase family. Type 1 subfamily. In terms of assembly, homodimer.

The enzyme catalyses orotidine 5'-phosphate + H(+) = UMP + CO2. The protein operates within pyrimidine metabolism; UMP biosynthesis via de novo pathway; UMP from orotate: step 2/2. Its function is as follows. Catalyzes the decarboxylation of orotidine 5'-monophosphate (OMP) to uridine 5'-monophosphate (UMP). This is Orotidine 5'-phosphate decarboxylase from Escherichia fergusonii (strain ATCC 35469 / DSM 13698 / CCUG 18766 / IAM 14443 / JCM 21226 / LMG 7866 / NBRC 102419 / NCTC 12128 / CDC 0568-73).